The following is a 35-amino-acid chain: Phospholipase A2 bitanarin (35 aa).

This sequence belongs to the phospholipase A2 family. Group II subfamily. As to quaternary structure, monomer. Ca(2+) serves as cofactor. Contains 14 disulfide bonds. Expressed by the venom gland.

Its subcellular location is the secreted. It carries out the reaction a 1,2-diacyl-sn-glycero-3-phosphocholine + H2O = a 1-acyl-sn-glycero-3-phosphocholine + a fatty acid + H(+). Functionally, snake venom phospholipase A2 (PLA2) that is the first competitive blocker of nicotinic acetylcholine receptors (nAChRs). Competes with alpha-bungarotoxin for binding to nAChRs and acetylcholine binding proteins (AChBPs) and blocks acetylcholine-elicited current. PLA2 catalyzes the calcium-dependent hydrolysis of the 2-acyl groups in 3-sn-phosphoglycerides. The sequence is that of Phospholipase A2 bitanarin from Bitis arietans (African puff adder).